We begin with the raw amino-acid sequence, 190 residues long: Imidazoleglycerol-phosphate dehydratase (190 aa).

It belongs to the imidazoleglycerol-phosphate dehydratase family.

It is found in the cytoplasm. The enzyme catalyses D-erythro-1-(imidazol-4-yl)glycerol 3-phosphate = 3-(imidazol-4-yl)-2-oxopropyl phosphate + H2O. The protein operates within amino-acid biosynthesis; L-histidine biosynthesis; L-histidine from 5-phospho-alpha-D-ribose 1-diphosphate: step 6/9. The sequence is that of Imidazoleglycerol-phosphate dehydratase from Methanococcus maripaludis (strain C7 / ATCC BAA-1331).